The sequence spans 385 residues: FAD-dependent monooxygenase verC2 (385 aa).

Arginine 27, aspartate 227, and alanine 240 together coordinate FAD. N-linked (GlcNAc...) asparagine glycosylation occurs at asparagine 320. Residues 365-385 (WKTTIMFIALLTIVVLIYSFI) traverse the membrane as a helical segment.

This sequence belongs to the paxM FAD-dependent monooxygenase family. Requires FAD as cofactor.

The protein localises to the membrane. It functions in the pathway secondary metabolite biosynthesis; terpenoid biosynthesis. Its pathway is mycotoxin biosynthesis. FAD-dependent monooxygenase; part of the gene cluster that mediates the biosynthesis of the neurotoxin verrucosidin, a methylated alpha-pyrone polyketide that inhibits oxidative phosphorylation in mitochondria and thereby causes neurological diseases. The carbon backbone of verrucosidin is synthesized by the HR-PKS verA, and further modified by the other verrucodidin cluster enzymes. The sequence is that of FAD-dependent monooxygenase verC2 from Penicillium polonicum.